We begin with the raw amino-acid sequence, 244 residues long: Probable transcriptional regulatory protein Dgeo_2194 (244 aa).

The disordered stretch occupies residues 1–21; that stretch reads MAGHSKWAQIKRKKGANDKKR.

This sequence belongs to the TACO1 family.

It localises to the cytoplasm. The chain is Probable transcriptional regulatory protein Dgeo_2194 from Deinococcus geothermalis (strain DSM 11300 / CIP 105573 / AG-3a).